A 584-amino-acid polypeptide reads, in one-letter code: Glycosyltransferase family 92 protein Os08g0121900 (584 aa).

A compositionally biased stretch (basic and acidic residues) spans 1-10; that stretch reads MALAAKERKL. The interval 1–33 is disordered; the sequence is MALAAKERKLSRLGSKGSGGGGGGGSFGARGQR. A compositionally biased stretch (gly residues) spans 16–28; the sequence is KGSGGGGGGGSFG. The helical transmembrane segment at 43 to 63 threads the bilayer; that stretch reads FAAFFAFLFAGAVLFGAAHVI. Residues 314-525 enclose the GT92 domain; that stretch reads HSMCVCTMLR…DKFSGRVATY (212 aa).

Belongs to the glycosyltransferase 92 family.

Its subcellular location is the membrane. The polypeptide is Glycosyltransferase family 92 protein Os08g0121900 (Oryza sativa subsp. japonica (Rice)).